The sequence spans 279 residues: Pantothenate synthetase (279 aa).

An ATP-binding site is contributed by 26–33; it reads MGNLHDGH. Catalysis depends on His33, which acts as the Proton donor. Gln57 serves as a coordination point for (R)-pantoate. Beta-alanine is bound at residue Gln57. An ATP-binding site is contributed by 144–147; sequence GKKD. Gln150 serves as a coordination point for (R)-pantoate. 181-184 contacts ATP; that stretch reads LSSR.

It belongs to the pantothenate synthetase family. Homodimer.

It is found in the cytoplasm. The enzyme catalyses (R)-pantoate + beta-alanine + ATP = (R)-pantothenate + AMP + diphosphate + H(+). The protein operates within cofactor biosynthesis; (R)-pantothenate biosynthesis; (R)-pantothenate from (R)-pantoate and beta-alanine: step 1/1. In terms of biological role, catalyzes the condensation of pantoate with beta-alanine in an ATP-dependent reaction via a pantoyl-adenylate intermediate. The polypeptide is Pantothenate synthetase (Herminiimonas arsenicoxydans).